We begin with the raw amino-acid sequence, 215 residues long: Ectodysplasin-A receptor-associated adapter protein (215 aa).

2 disordered regions span residues 1–41 (MGLR…FNMS) and 62–86 (LNCP…TGDP). A compositionally biased stretch (basic and acidic residues) spans 17-28 (GHQEDHMVKEPV). Residues 123 to 202 (DVIRIKLDPC…KVLRRWVDEE (80 aa)) form the Death domain.

Self-associates and binds EDAR, TRAF1, TRAF2 and TRAF3. In terms of tissue distribution, detected in adult pancreas, placenta and fetal skin, and at lower levels in lung, thymus, prostate and testis.

It is found in the cytoplasm. Functionally, adapter protein that interacts with EDAR DEATH domain and couples the receptor to EDA signaling pathway during morphogenesis of ectodermal organs. Mediates the activation of NF-kappa-B. The chain is Ectodysplasin-A receptor-associated adapter protein (EDARADD) from Homo sapiens (Human).